The following is a 608-amino-acid chain: Pentatricopeptide repeat-containing protein 1, apicoplast (608 aa).

PPR repeat units follow at residues 165–199 (TTLAFNAAMSAVEKKGCLSTMLDLIGTMKSKNIKP), 200–230 (DLVSYKLVLSLCDKYHLVDTAEILFEEMIES), 236–270 (NYEIYAIMISCYAKTGNGYKAIELFEKLRNDPFVE), 336–370 (QYSEYANVIYACNISNLYEQGIKYFEELLKSGKYM), 372–402 (SIFVFENIFDLLSKNGDYEKSLEYYNNLKND), 410–445 (NVNILNNLLKALSIHNKINVAEDIWNNEFDELLLTP), and 446–480 (NNLSYQILLKIYSHIDNYEKAFKLFKEMQVNKLLN).

The protein belongs to the PPR family. P subfamily. In terms of assembly, homodimer.

The protein localises to the plastid. It is found in the apicoplast. Binds to apicoplast RNA transcripts, preferentially to the motif UUAU, and protects RNA transcripts from degradation by ribonuclease. In Plasmodium falciparum (isolate 3D7), this protein is Pentatricopeptide repeat-containing protein 1, apicoplast.